Consider the following 118-residue polypeptide: Large ribosomal subunit protein uL18 (118 aa).

This sequence belongs to the universal ribosomal protein uL18 family. As to quaternary structure, part of the 50S ribosomal subunit; part of the 5S rRNA/L5/L18/L25 subcomplex. Contacts the 5S and 23S rRNAs.

Its function is as follows. This is one of the proteins that bind and probably mediate the attachment of the 5S RNA into the large ribosomal subunit, where it forms part of the central protuberance. The polypeptide is Large ribosomal subunit protein uL18 (Lactobacillus acidophilus (strain ATCC 700396 / NCK56 / N2 / NCFM)).